The sequence spans 243 residues: Large ribosomal subunit protein uL2 (243 aa).

Disordered stretches follow at residues 1 to 23 (MGKRIRPQRLGRGGPTYRAPSHR) and 204 to 243 (PFGGGNHQSPGKPTTIARGDPPGRKVGHIAARKTGRGGRR). Over residues 228–243 (KVGHIAARKTGRGGRR) the composition is skewed to basic residues.

Belongs to the universal ribosomal protein uL2 family. In terms of assembly, part of the 50S ribosomal subunit. Forms a bridge to the 30S subunit in the 70S ribosome.

In terms of biological role, one of the primary rRNA binding proteins. Required for association of the 30S and 50S subunits to form the 70S ribosome, for tRNA binding and peptide bond formation. It has been suggested to have peptidyltransferase activity; this is somewhat controversial. Makes several contacts with the 16S rRNA in the 70S ribosome. In Methanopyrus kandleri (strain AV19 / DSM 6324 / JCM 9639 / NBRC 100938), this protein is Large ribosomal subunit protein uL2.